The primary structure comprises 298 residues: Heat stress transcription factor C-2a (298 aa).

Positions Ser105–Ala128 are disordered. The segment at Leu145–Val181 is hydrophobic repeat HR-A/B. Residues Lys213–Arg216 carry the Nuclear localization signal motif.

Belongs to the HSF family. Class C subfamily. In terms of assembly, homotrimer. In terms of processing, exhibits temperature-dependent phosphorylation.

The protein localises to the nucleus. Transcriptional regulator that specifically binds DNA of heat shock promoter elements (HSE). The chain is Heat stress transcription factor C-2a (HSFC2A) from Oryza sativa subsp. japonica (Rice).